The chain runs to 153 residues: UPF0178 protein MXAN_5526 (153 aa).

This sequence belongs to the UPF0178 family.

The chain is UPF0178 protein MXAN_5526 from Myxococcus xanthus (strain DK1622).